We begin with the raw amino-acid sequence, 517 residues long: Heat shock 70-related protein 5 (517 aa).

Belongs to the heat shock protein 70 family.

Functionally, may function in protein folding and assembly, and disassembly of protein complexes. The protein is Heat shock 70-related protein 5 of Dictyostelium discoideum (Social amoeba).